The sequence spans 1005 residues: Defense-associated sirtuin 2 (1005 aa).

The segment at 1 to 295 is SIR2; that stretch reads MVKVDLESKR…YSAVMDLLIE (295 aa). Positions 56–111 are inter-dimer interaction; sequence YPQWWRLVDKYHEELYGSPKKGNYSSDEYLRIPQIFYNVKGEMAFDGILKDFFQVD. Residues Tyr134, Asp135, and His171 contribute to the active site. Residues 296–548 form an MID region; sequence SQENKFITKD…YKILEFLSDN (253 aa). The tract at residues 549-1005 is CTD; the sequence is QFLYDDTVKL…YLEILMNYFI (457 aa).

As to quaternary structure, homotetramer (dimer of dimers). Homodimer. The SIR2 domains are arranged in a central core, adopting a head-to-head arrangement, while the CTDs are positioned at the periphery of the complex. Tetramerization is necessary for the activation of NADase activity. The NADase enzymatic activity of this homotetrameric form is autoinhibited. The activated form of DSR2 (after binding to the phage tube protein) exists as tetramers and dimers, with the tetramers exhibiting more NADase activity. Each tetramer binds 4 NAD(+) molecules. In terms of assembly, (Microbial infection) Interacts (via C-terminus) with phage SPR tail tube monomer protein (via N-terminus) in a 4:4 DSR2-Tube assembly; this interaction induces a conformation change of the tube protein and activates the NADase activity of DSR2. (Microbial infection) Interacts (via C-terminus) with phage SPbeta DSAD1 in a 4:2 ratio; this interaction prevents activation of the NADase defense activity of DSR2.

The enzyme catalyses NAD(+) + H2O = ADP-D-ribose + nicotinamide + H(+). With respect to regulation, (Microbial infection) NADase activity is activated through the binding of SPR phage tail tube monomer protein. NADase activity is inhibited through the binding to the phage SPbeta DSR anti-defense 1 (DSAD1). In terms of biological role, anti-phage defense protein that is activated through the binding to the phage tail tube protein monomer and which hydrolyzes NAD+ upon activation (NADase activity). The resulting depletion of NAD(+) leads to an abortive infection. The sequence is that of Defense-associated sirtuin 2 from Bacillus subtilis.